The chain runs to 470 residues: Cysteine--tRNA ligase (470 aa).

C28 is a binding site for Zn(2+). The 'HIGH' region motif lies at 30-40; that stretch reads PTVYNYIHIGN. Zn(2+) is bound by residues C212, H237, and E241. The 'KMSKS' region signature appears at 271–275; that stretch reads KMSKS. K274 provides a ligand contact to ATP.

The protein belongs to the class-I aminoacyl-tRNA synthetase family. Monomer. The cofactor is Zn(2+).

It localises to the cytoplasm. The catalysed reaction is tRNA(Cys) + L-cysteine + ATP = L-cysteinyl-tRNA(Cys) + AMP + diphosphate. This chain is Cysteine--tRNA ligase, found in Limosilactobacillus reuteri (strain DSM 20016) (Lactobacillus reuteri).